A 93-amino-acid chain; its full sequence is Acylphosphatase (93 aa).

The Acylphosphatase-like domain maps to 6 to 93 (RAHILVSGEV…GDLGPFSVRH (88 aa)). Active-site residues include arginine 21 and asparagine 39.

The protein belongs to the acylphosphatase family.

The catalysed reaction is an acyl phosphate + H2O = a carboxylate + phosphate + H(+). This Anaeromyxobacter sp. (strain Fw109-5) protein is Acylphosphatase (acyP).